A 141-amino-acid polypeptide reads, in one-letter code: Extracellular globin-1 (141 aa).

The 141-residue stretch at 1–141 (DCNTLKRFKV…YAVIAAGIKP (141 aa)) folds into the Globin domain. The cysteines at positions 2 and 131 are disulfide-linked. Residue His-94 coordinates heme b.

This sequence belongs to the globin family. The giant hemoglobins of worms are formed of a monomeric subunit and a disulfide-bonded trimer. This subunit is monomeric.

It is found in the secreted. This chain is Extracellular globin-1, found in Metaphire sieboldi (Earthworm).